Consider the following 351-residue polypeptide: UDP-N-acetylenolpyruvoylglucosamine reductase (351 aa).

The FAD-binding PCMH-type domain maps to 25 to 196 (HIQAQARWLL…TAVEFRLPLL (172 aa)). Residue R173 is part of the active site. S246 (proton donor) is an active-site residue. Residue E343 is part of the active site.

This sequence belongs to the MurB family. The cofactor is FAD.

The protein resides in the cytoplasm. It carries out the reaction UDP-N-acetyl-alpha-D-muramate + NADP(+) = UDP-N-acetyl-3-O-(1-carboxyvinyl)-alpha-D-glucosamine + NADPH + H(+). It participates in cell wall biogenesis; peptidoglycan biosynthesis. Its function is as follows. Cell wall formation. In Xylella fastidiosa (strain M23), this protein is UDP-N-acetylenolpyruvoylglucosamine reductase.